A 147-amino-acid chain; its full sequence is SsrA-binding protein (147 aa).

It belongs to the SmpB family.

It is found in the cytoplasm. Its function is as follows. Required for rescue of stalled ribosomes mediated by trans-translation. Binds to transfer-messenger RNA (tmRNA), required for stable association of tmRNA with ribosomes. tmRNA and SmpB together mimic tRNA shape, replacing the anticodon stem-loop with SmpB. tmRNA is encoded by the ssrA gene; the 2 termini fold to resemble tRNA(Ala) and it encodes a 'tag peptide', a short internal open reading frame. During trans-translation Ala-aminoacylated tmRNA acts like a tRNA, entering the A-site of stalled ribosomes, displacing the stalled mRNA. The ribosome then switches to translate the ORF on the tmRNA; the nascent peptide is terminated with the 'tag peptide' encoded by the tmRNA and targeted for degradation. The ribosome is freed to recommence translation, which seems to be the essential function of trans-translation. The chain is SsrA-binding protein from Mycoplasmopsis fermentans (strain ATCC 19989 / NBRC 14854 / NCTC 10117 / PG18) (Mycoplasma fermentans).